The chain runs to 1198 residues: MAAAIGVRGRFELLPRSGPGWLLSLSALLSVVARGALATTHWVVTEDGKIQQQVDSPMNLKHPHDLVILMRQETTVNYLKELEKQLVAQKIHIEENEDRDTGLEQRHNKEDPDCIKAKVPLGDLDLYDGTYITLESKDIRPEDFIDTESPVPPDPEQPDCTKILELPYSIHAFQHLRGVQERVNLSAPLLPKEDPIFTYLSKRLGRSIDDIGHLIHEGLQKNASSWVLYNLASFYWRIKNEPYQVVECAMRALHFSSRHNKDIALVNLANVLHRAHFSADAAVVVHAALDDSDFFTSYYTLGNIYAMLGEYNHSVLCYDHALQAKPGFEQAIKRKHAVLCQQKLEQKLEAQHRSLQRTLNELKEYQKQHDHYLRQQEILEKHKLIQEEQILRNIIHETQMAKEAQLGNHQICRLVNQQHSLHCQWDQPVRYHRGDIFENVDYVQFGDDSSTSSMMSVNFDVPTNQSDVSESVRSSPVAHSVLWVWGRDSDAYRDKQHILWPKRADCTDSYPRVPLGGELPTYFLPPENKGLRIHELTSDDYSSEEEAQPPDCSITDYRKSHTLSYLVKELEVRMDLKAKIPDDHARKILLSRIKNYTVPEEEIGSFLFHAINKPNAPVWLILNEAGLYWRAVGNSTFAIACLQRALNLAPVQYQDIPLVNLANLLIHYGLHLDATKLLLQAVAVNSSEPLTFLSLGNAYLALKNVSGALEAFRQALKLSTKCPECESSLKLIRCMQFYPFLYNATSSVCGGHCHEKPLDNSHDKQKYFAKPQSLDAAAEEPSGHGADEDPVLSVENAGRDSDALRLESTVVEESNGSDEVEKSDETKMSEEILALVDEFQQAWPLEGFGGTLEMKGRRLDLQGIRVLKKGPQDGVAKSSCYGDCRSEDDEATEWITFQVKRVKKPKGDHKKPPGKKVEASQAENGQRYQANLEITGPKVASPGPQEKKRDYQSLGWPSPDECLKLRWVELTAIVSTWLAVSSKNIDITEHIDFATPIQQPAMEPLCNGNLPTSMHTLDHLHGVSNRASLHYTGESQLTEVLQNLGKDQYPQQSLEQIGTRIAKVLEKNQTSWVLSSMAALYWRVKGQGKKAIDCLRQALHYAPHQMKDVPLISLANILHNAKLWNDAVIVATMAVEIAPHFAVNHFTLGNVYVAMEEFEKALVWYESTLKLQPEFVPAKNRIQTIQCHLMLKKGRRSP.

Residues 295–328 (FTSYYTLGNIYAMLGEYNHSVLCYDHALQAKPGF) form a TPR 1 repeat. The stretch at 340 to 382 (CQQKLEQKLEAQHRSLQRTLNELKEYQKQHDHYLRQQEILEKH) forms a coiled coil. TPR repeat units follow at residues 619–652 (WLIL…APVQ) and 689–722 (PLTF…STKC). Disordered stretches follow at residues 774–793 (LDAA…PVLS) and 902–954 (VKKP…YQSL). The span at 902-914 (VKKPKGDHKKPPG) shows a compositional bias: basic residues. TPR repeat units lie at residues 1071–1105 (SWVL…APHQ), 1108–1141 (DVPL…APHF), and 1142–1175 (AVNH…QPEF).

This sequence belongs to the TTC17 family. As to quaternary structure, interacts with CATIP.

It is found in the cytoplasm. Its subcellular location is the cell membrane. It localises to the cytoskeleton. In terms of biological role, plays a role in primary ciliogenesis by modulating actin polymerization. The polypeptide is Tetratricopeptide repeat protein 17 (Ttc17) (Mus musculus (Mouse)).